A 170-amino-acid polypeptide reads, in one-letter code: METRSKPQLLVFLTLFSVLFSQTLAWPLFGAPSALRMGDRIPFEGANEPDQVSLKADTDILQDALAENDTPYYDVSRNVRHADGVFTSDYSRLLGQLSAKKYLESLIGKRVSNSISEDQGPIKRHSDAVFTDNYTRLRKQMAVKKYLNSILNGKRSSEGESPDFLEELEK.

Positions 1 to 25 (METRSKPQLLVFLTLFSVLFSQTLA) are cleaved as a signal peptide. A propeptide spanning residues 26-79 (WPLFGAPSALRMGDRIPFEGANEPDQVSLKADTDILQDALAENDTPYYDVSRNV) is cleaved from the precursor. Phosphoserine is present on Ser76. Residue Ile107 is modified to Isoleucine amide. Residues 111 to 122 (VSNSISEDQGPI) constitute a propeptide that is removed on maturation. Asn152 is modified (asparagine amide). Residues 156-170 (SSEGESPDFLEELEK) constitute a propeptide that is removed on maturation.

Belongs to the glucagon family.

It is found in the secreted. In terms of biological role, VIP is a neuropeptide involved in a diverse array of physiological processes through activating the PACAP subfamily of class B1 G protein-coupled receptors: VIP receptor 1 (VPR1) and VIP receptor 2 (VPR2). Abundantly expressed throughout the CNS and peripheral nervous systems where they primarily exert neuroprotective and immune modulatory roles. Also causes vasodilation, lowers arterial blood pressure, stimulates myocardial contractility, increases glycogenolysis and relaxes the smooth muscle of trachea, stomach and gall bladder. Functionally, PHM-27 is a bioactive form from proteolysis of the same precursor protein, that causes vasodilation. It is a potent agonist of the calcitonin receptor CALCR, with similar efficacy as calcitonin. This is VIP peptides (VIP) from Bos taurus (Bovine).